A 141-amino-acid polypeptide reads, in one-letter code: Thioredoxin-like protein SkfH (141 aa).

The region spanning 2-141 is the Thioredoxin domain; that stretch reads KDEQMLTEWP…DKMLKKIAGL (140 aa). Cysteines 41 and 44 form a disulfide.

Functionally, required for production of the bacteriocin SkfA. The polypeptide is Thioredoxin-like protein SkfH (Bacillus subtilis (strain 168)).